A 567-amino-acid chain; its full sequence is Serine/threonine-protein kinase SSN3 (567 aa).

The region spanning 68–470 (YEIIGYIAAG…AINALDHSYF (403 aa)) is the Protein kinase domain. 74–82 (IAAGTYGKV) is a binding site for ATP. Residues 88-179 (RQSSKSSSST…RNSENTDNRR (92 aa)) are disordered. The segment covering 90–101 (SSKSSSSTGSDS) has biased composition (low complexity). 2 stretches are compositionally biased toward polar residues: residues 102-122 (LAQDTKPTTEFSNTSSLQNAG) and 133-150 (PNSNNISAGGNTNPELST). The span at 167 to 179 (GDKRNSENTDNRR) shows a compositional bias: basic and acidic residues. Position 190 (lysine 190) interacts with ATP. The active-site Proton acceptor is the aspartate 293. Residues 546 to 556 (AVSGNSSSQSS) are compositionally biased toward low complexity. A disordered region spans residues 546 to 567 (AVSGNSSSQSSRNMEPMKKKRK).

Belongs to the protein kinase superfamily. CMGC Ser/Thr protein kinase family. CDC2/CDKX subfamily. Component of the SRB8-11 complex, a regulatory module of the Mediator complex. Mg(2+) is required as a cofactor.

Its subcellular location is the nucleus. The catalysed reaction is L-seryl-[protein] + ATP = O-phospho-L-seryl-[protein] + ADP + H(+). It carries out the reaction L-threonyl-[protein] + ATP = O-phospho-L-threonyl-[protein] + ADP + H(+). The enzyme catalyses [DNA-directed RNA polymerase] + ATP = phospho-[DNA-directed RNA polymerase] + ADP + H(+). Component of the SRB8-11 complex. The SRB8-11 complex is a regulatory module of the Mediator complex which is itself involved in regulation of basal and activated RNA polymerase II-dependent transcription. The SRB8-11 complex may be involved in the transcriptional repression of a subset of genes regulated by Mediator. It may inhibit the association of the Mediator complex with RNA polymerase II to form the holoenzyme complex. The SRB8-11 complex phosphorylates the C-terminal domain (CTD) of the largest subunit of RNA polymerase II. This is Serine/threonine-protein kinase SSN3 (SSN3) from Candida glabrata (strain ATCC 2001 / BCRC 20586 / JCM 3761 / NBRC 0622 / NRRL Y-65 / CBS 138) (Yeast).